The sequence spans 87 residues: uncharacterized protein (87 aa).

One can recognise a 2Fe-2S ferredoxin-type domain in the interval 4-87; the sequence is SIIEITNIKK…KPKGNITIKI (84 aa). Cys-38, Cys-43, Cys-46, and Cys-75 together coordinate [2Fe-2S] cluster.

[2Fe-2S] cluster serves as cofactor.

This is an uncharacterized protein from Buchnera aphidicola subsp. Acyrthosiphon pisum (strain APS) (Acyrthosiphon pisum symbiotic bacterium).